Consider the following 444-residue polypeptide: Phosphoglucosamine mutase (444 aa).

S102 acts as the Phosphoserine intermediate in catalysis. The Mg(2+) site is built by S102, D241, D243, and D245. At S102 the chain carries Phosphoserine.

This sequence belongs to the phosphohexose mutase family. Mg(2+) is required as a cofactor. In terms of processing, activated by phosphorylation.

It catalyses the reaction alpha-D-glucosamine 1-phosphate = D-glucosamine 6-phosphate. Functionally, catalyzes the conversion of glucosamine-6-phosphate to glucosamine-1-phosphate. In Actinobacillus pleuropneumoniae serotype 5b (strain L20), this protein is Phosphoglucosamine mutase.